The chain runs to 173 residues: Archaemetzincin (173 aa).

His-130 is a Zn(2+) binding site. Residue Glu-131 is the Proton acceptor of the active site. Positions 134, 140, 141, 146, 165, and 168 each coordinate Zn(2+).

This sequence belongs to the peptidase M54 family. In terms of assembly, monomer. Requires Zn(2+) as cofactor.

In terms of biological role, probable zinc metalloprotease whose natural substrate is unknown. This is Archaemetzincin from Halobacterium salinarum (strain ATCC 29341 / DSM 671 / R1).